The chain runs to 814 residues: Rho GTPase-activating protein 44 (814 aa).

The 236-residue stretch at 14-249 (QTVGRAEKTE…IKAQQEAWVE (236 aa)) folds into the BAR domain. The Rho-GAP domain maps to 255-445 (KPLEEHLMIS…PIIQHADWFF (191 aa)). Disordered regions lie at residues 467-493 (ANYS…RPLS), 528-769 (RGSS…MSTD), and 784-814 (STLR…STAL). Basic and acidic residues predominate over residues 479-489 (PADRRQPEQAR). Residue Ser-493 is modified to Phosphoserine. Composition is skewed to low complexity over residues 567 to 581 (SPAT…SGAS), 598 to 612 (SPGS…SIQG), 622 to 637 (PQPA…DQSP), 684 to 704 (SPYG…LSPA), and 741 to 752 (SVSLSASSPQST). Residues 727 to 814 (KPRQRPTLPP…SEEESESTAL (88 aa)) form an interaction with BST2 region. Residues 790–805 (PLEHARRHSATDKRDS) show a composition bias toward basic and acidic residues. Phosphoserine is present on Ser-805. Residues 811–814 (STAL) carry the PDZ-binding motif.

As to quaternary structure, interacts with BST2 (via cytoplasmic domain). Interacts (probably via PDZ-binding motif) with SHANK3 (via PDZ domain); the interaction takes place in dendritic spines and promotes GRIA1 exocytosis. In terms of tissue distribution, specifically expressed in brain (at protein level). Detected in olfactory bulb, cortex, hippocampus, diencephalon and cerebellum (at protein level). Expressed in hippocampal neurons (at protein level).

The protein localises to the cell projection. It localises to the dendritic spine. It is found in the recycling endosome. The protein resides in the presynapse. Its subcellular location is the dendrite. In terms of biological role, GTPase-activating protein (GAP) that stimulates the GTPase activity of Rho-type GTPases. Thereby, controls Rho-type GTPases cycling between their active GTP-bound and inactive GDP-bound states. Acts as a GAP at least for CDC42 and RAC1. In neurons, is involved in dendritic spine formation and synaptic plasticity in a specific RAC1-GAP activity. Limits the initiation of exploratory dendritic filopodia. Recruited to actin-patches that seed filopodia, binds specifically to plasma membrane sections that are deformed inward by acto-myosin mediated contractile forces. Acts through GAP activity on RAC1 to reduce actin polymerization necessary for filopodia formation. In association with SHANK3, promotes GRIA1 exocytosis from recycling endosomes and spine morphological changes associated to long-term potentiation. This is Rho GTPase-activating protein 44 from Mus musculus (Mouse).